The chain runs to 433 residues: Histidinol dehydrogenase 2 (433 aa).

NAD(+) contacts are provided by Y130, Q192, and N215. Residues S238, Q260, and H263 each coordinate substrate. Zn(2+) contacts are provided by Q260 and H263. Active-site proton acceptor residues include E328 and H329. 4 residues coordinate substrate: H329, D362, E416, and H421. Zn(2+) is bound at residue D362. A Zn(2+)-binding site is contributed by H421.

It belongs to the histidinol dehydrogenase family. It depends on Zn(2+) as a cofactor.

It catalyses the reaction L-histidinol + 2 NAD(+) + H2O = L-histidine + 2 NADH + 3 H(+). It functions in the pathway amino-acid biosynthesis; L-histidine biosynthesis; L-histidine from 5-phospho-alpha-D-ribose 1-diphosphate: step 9/9. Its function is as follows. Catalyzes the sequential NAD-dependent oxidations of L-histidinol to L-histidinaldehyde and then to L-histidine. In Nostoc sp. (strain PCC 7120 / SAG 25.82 / UTEX 2576), this protein is Histidinol dehydrogenase 2 (hisD2).